The sequence spans 124 residues: V-type proton ATPase subunit F (124 aa).

It belongs to the V-ATPase F subunit family. In terms of assembly, V-ATPase is a heteromultimeric enzyme composed of a peripheral catalytic V1 complex (components A to H) attached to an integral membrane V0 proton pore complex (components: a, c, c', c'', d, e, f and VOA1).

The protein resides in the vacuole membrane. Functionally, subunit of the V1 complex of vacuolar(H+)-ATPase (V-ATPase), a multisubunit enzyme composed of a peripheral complex (V1) that hydrolyzes ATP and a membrane integral complex (V0) that translocates protons. V-ATPase is responsible for acidifying and maintaining the pH of intracellular compartments. This Neosartorya fischeri (strain ATCC 1020 / DSM 3700 / CBS 544.65 / FGSC A1164 / JCM 1740 / NRRL 181 / WB 181) (Aspergillus fischerianus) protein is V-type proton ATPase subunit F (vma7).